The primary structure comprises 356 residues: MRIVFKIGSNLLETDEGDIDLSFLSKLAEGIKKLHSFGDKVLIVSSGAVLSGAKKLGIKEKPKDLTLKQALASVGQSYLMHLYDTIFSNYGLKVGQVLLTKDVFSKEKEERFKNAKSTLEKLLELGVVPVINENDAVAVEELVFGDNDFLAVYVSFMVNADLLVIFSSAGGLKDDKDRIIPVVEDIEKVFKYVRGTGTSFGTGGMRSKLEATRLATTLNIPVIITSKEENILDLRNLKTKGTLFKPSKRKLRNALKVIATLEEPKGIIVVDRGAQEALKAGKSLLPAGVVSVQGNFKRGDVVSIQNEEGLIIGKGKVNFSSEEIEKIKGLKTSEVRKLLNTTKDEVIHRDNMVIFL.

Lys6 is a binding site for ATP. Residues Ser46, Asp135, and Asn147 each coordinate substrate. Residue 202 to 208 (TGGMRSK) participates in ATP binding. The PUA domain maps to 265–342 (KGIIVVDRGA…SEVRKLLNTT (78 aa)).

The protein belongs to the glutamate 5-kinase family.

The protein localises to the cytoplasm. The catalysed reaction is L-glutamate + ATP = L-glutamyl 5-phosphate + ADP. It functions in the pathway amino-acid biosynthesis; L-proline biosynthesis; L-glutamate 5-semialdehyde from L-glutamate: step 1/2. Functionally, catalyzes the transfer of a phosphate group to glutamate to form L-glutamate 5-phosphate. The chain is Glutamate 5-kinase from Aquifex aeolicus (strain VF5).